Consider the following 844-residue polypeptide: DNA mismatch repair protein MutS (844 aa).

Position 602–609 (602–609 (GPNMSGKS)) interacts with ATP.

This sequence belongs to the DNA mismatch repair MutS family.

Functionally, this protein is involved in the repair of mismatches in DNA. It is possible that it carries out the mismatch recognition step. This protein has a weak ATPase activity. This is DNA mismatch repair protein MutS from Streptococcus pneumoniae (strain ATCC 700669 / Spain 23F-1).